Reading from the N-terminus, the 221-residue chain is Elongation factor Ts (221 aa).

Residues 82–85 are involved in Mg(2+) ion dislocation from EF-Tu; sequence TDFV.

It belongs to the EF-Ts family.

The protein localises to the cytoplasm. Associates with the EF-Tu.GDP complex and induces the exchange of GDP to GTP. It remains bound to the aminoacyl-tRNA.EF-Tu.GTP complex up to the GTP hydrolysis stage on the ribosome. This chain is Elongation factor Ts, found in Synechococcus elongatus (strain ATCC 33912 / PCC 7942 / FACHB-805) (Anacystis nidulans R2).